The primary structure comprises 342 residues: MKALVKENAEPGLWLADVPEPTIGSGDVLIKVLRTGICGTDLHIRAWDGWAQQAIRTPLVVGHEFVGEVVDTGRDVTDIKAGDRVSGEGHLVCGKCRNCLAGRRHLCRATVGLGVGRDGAFAEYVALPASNVWVHRVPVDLDVAAIFDPFGNAVHTALSFPLVGEDVLITGAGPIGLMAAAVARHAGARNVVITDVSEERLELARKVGATLALNVSDATIADGQRELGLREGFDIGLEMSGRPEAMRDMIANMTHGGRIAMLGLPAEEFPVDWARVVTSMITVKGIYGREMFETWYAMSVLLEGGLDLAPVITGRYSHRDFEAAFADAASGRGGKVILDWTA.

Cys38 contacts Zn(2+). Catalysis depends on charge relay system residues Thr40 and His43. Residues His63, Glu64, Cys93, Cys96, Cys99, and Cys107 each coordinate Zn(2+). NAD(+) contacts are provided by residues Ile175, Asp195, Arg200, 262–264 (LGL), and 286–287 (IY).

This sequence belongs to the zinc-containing alcohol dehydrogenase family. As to quaternary structure, homotetramer. Requires Zn(2+) as cofactor.

Its subcellular location is the cytoplasm. The enzyme catalyses L-threonine + NAD(+) = (2S)-2-amino-3-oxobutanoate + NADH + H(+). The protein operates within amino-acid degradation; L-threonine degradation via oxydo-reductase pathway; glycine from L-threonine: step 1/2. Functionally, catalyzes the NAD(+)-dependent oxidation of L-threonine to 2-amino-3-ketobutyrate. This Streptomyces coelicolor (strain ATCC BAA-471 / A3(2) / M145) protein is L-threonine 3-dehydrogenase.